Reading from the N-terminus, the 222-residue chain is UPF0758 protein YPN_3801 (222 aa).

The region spanning 100 to 222 is the MPN domain; it reads VLLNPGITQK…CVSFAERGWL (123 aa). Residues H171, H173, and D184 each contribute to the Zn(2+) site. Residues 171-184 carry the JAMM motif motif; the sequence is HNHPSGKAEPSQAD.

The protein belongs to the UPF0758 family. YicR subfamily.

The sequence is that of UPF0758 protein YPN_3801 from Yersinia pestis bv. Antiqua (strain Nepal516).